The sequence spans 237 residues: Bax inhibitor 1 (237 aa).

The Cytoplasmic portion of the chain corresponds to 1–29 (MNIFDRKINFDALLKFSHITPSTQQHLKK). A Glycyl lysine isopeptide (Lys-Gly) (interchain with G-Cter in ubiquitin) cross-link involves residue lysine 7. Residues 30 to 50 (VYASFALCMFVAAAGAYVHVV) form a helical membrane-spanning segment. At 51 to 52 (TR) the chain is on the lumenal side. The helical transmembrane segment at 53–73 (FIQAGLLSALGALALMICLMA) threads the bilayer. Residues 74–86 (TPHSHETEQKRLG) are Cytoplasmic-facing. A helical transmembrane segment spans residues 87 to 107 (LLAGFAFLTGVGLGPALELCI). At 108 to 112 (AINPS) the chain is on the lumenal side. Residues 113-133 (ILPTAFMGTAMIFTCFSLSAL) form a helical membrane-spanning segment. Over 134–139 (YARRRS) the chain is Cytoplasmic. A helical transmembrane segment spans residues 140–160 (YLFLGGILMSAMSLMFVSSLG). Residues 161–166 (NLFFGS) are Lumenal-facing. A helical membrane pass occupies residues 167–187 (IWLFQANLYMGLLVMCGFVLF). Residues 188 to 206 (DTQLIIEKAEHGDKDYIWH) lie on the Cytoplasmic side of the membrane. Positions 207–227 (CIDLFLDFVTLFRKLMLILAF) form an intramembrane region, helical. At 228–237 (NEKDKKKEKK) the chain is on the cytoplasmic side.

It belongs to the BI1 family. As to quaternary structure, interacts with BCL2 and BCL2L1. Interacts with ERN1. In terms of processing, ubiquitinated by BFAR, leading to proteasomal degradation. In terms of tissue distribution, highly abundant in adult testis.

It localises to the endoplasmic reticulum membrane. Endoplasmic reticulum (ER)-resident protein that confers cellular protection as an anti-apoptotic protein by limiting multiple stress-inducing pathways surrounding the endoplasmic reticulum and mitochondria. Inhibits the activities of the key sensor for the endoplasmic reticulum unfolded protein response IRE1alpha/ERN1 both directly and by blocking BAX/BAK binding. Modulates ER calcium homeostasis by acting as a calcium-leak channel. Negatively regulates autophagy and autophagosome formation, especially during periods of nutrient deprivation, and reduces cell survival during starvation. In Rattus norvegicus (Rat), this protein is Bax inhibitor 1 (Tmbim6).